The chain runs to 462 residues: UDP-N-acetylmuramate--L-alanine ligase (462 aa).

119 to 125 (GTHGKTT) is an ATP binding site.

This sequence belongs to the MurCDEF family.

Its subcellular location is the cytoplasm. The catalysed reaction is UDP-N-acetyl-alpha-D-muramate + L-alanine + ATP = UDP-N-acetyl-alpha-D-muramoyl-L-alanine + ADP + phosphate + H(+). It participates in cell wall biogenesis; peptidoglycan biosynthesis. In terms of biological role, cell wall formation. This chain is UDP-N-acetylmuramate--L-alanine ligase, found in Parabacteroides distasonis (strain ATCC 8503 / DSM 20701 / CIP 104284 / JCM 5825 / NCTC 11152).